The chain runs to 512 residues: NAD(P) transhydrogenase subunit alpha (512 aa).

Over 1–400 (MLIGVPRELL…KESKPTDPRV (400 aa)) the chain is Cytoplasmic. NAD(+) is bound by residues 125–128 (QALD), Val-175, 195–197 (DSR), and Gly-225. The segment at 375–394 (SAQPKQETKAAPVAEKKESK) is disordered. The next 2 helical transmembrane spans lie at 401-421 (KYGVMAGVGVLFLWLASVAPA) and 422-442 (AFLSHFTVFVLACVVGYYVVW). Residues 443-451 (NVSHALHTP) are Cytoplasmic-facing. The chain crosses the membrane as a helical span at residues 452 to 472 (LMAVTNAISGIIIVGALLQIR). Over 473-478 (QPTGNL) the chain is Periplasmic. A helical membrane pass occupies residues 479 to 499 (FIDALAFVAILVASINIFGGF). The Cytoplasmic portion of the chain corresponds to 500–512 (RVTQRMLAMFRKG).

Belongs to the AlaDH/PNT family. In terms of assembly, heterodimer of an alpha (PntA) and a beta (PntB) chain.

The protein resides in the cell inner membrane. The enzyme catalyses NAD(+) + NADPH + H(+)(in) = NADH + NADP(+) + H(+)(out). In terms of biological role, the transhydrogenation between NADH and NADP is coupled to respiration and ATP hydrolysis and functions as a proton pump across the membrane. The protein is NAD(P) transhydrogenase subunit alpha (pntA) of Haemophilus influenzae (strain ATCC 51907 / DSM 11121 / KW20 / Rd).